Here is a 216-residue protein sequence, read N- to C-terminus: MLKTDLIFERENFSHHDFQNATFKNCHFYMCSFDHADLRDAKFIDCRFIESKALEGCSFRFANLKDASFTNCMLAMSLFNGANCMGLELRKCDLKGANFQGANFANRVSNTMFFCSAFITGCNLTYCNFERVLLEKCDLFENRWNGANLAGATLKGSDLSRCEFSPEQWGTFNVEQCDLTHVELDGLDIRRVSLFGVKICDWQQEQLLAPFGLIIL.

It belongs to the pentapeptide repeat protein family.

Has no effect when overexpressed in E.coli. When Cys-115 is mutated to Tyr and overexpressed it increases (fluoro)quinolone resistance in E.coli up to 16-fold for ciprofloxacin, levofloxacin and nalidixic acid. This chain is Pentapeptide repeat protein VPA0095, found in Vibrio parahaemolyticus serotype O3:K6 (strain RIMD 2210633).